A 137-amino-acid polypeptide reads, in one-letter code: Profilin-3 (137 aa).

The protein belongs to the profilin family. In terms of assembly, interacts with ACTRT3.

Its subcellular location is the cytoplasm. It is found in the cytoskeleton. The protein resides in the nucleus. In terms of biological role, binds to actin and affects the structure of the cytoskeleton. Binds to poly-L-proline, phosphatidylinositol 3-phosphate (PtdIns(3)P), phosphatidylinositol 4,5-bisphosphate (PtdIns(4,5)P2) and phosphatidylinositol 4-phosphate (PtdIns(4)P). Slightly reduces actin polymerization. May be involved in spermatogenesis. The chain is Profilin-3 (PFN3) from Bos taurus (Bovine).